The primary structure comprises 522 residues: Sterol O-acyltransferase 2 (522 aa).

2 disordered regions span residues 1–36 (MEPGGARLRLQRTEGLGGERERQPCGDGNTETHRAP) and 74–96 (SYPSQDKPLPPPPPGSLSRTQEP). Residues 1-120 (MEPGGARLRL…LDELMEVQHF (120 aa)) are Cytoplasmic-facing. Residues 17–36 (GGERERQPCGDGNTETHRAP) show a composition bias toward basic and acidic residues. Residue His119 coordinates cholesterol. A helical transmembrane segment spans residues 121–142 (RTIYHMFIAGLCVFIISTLAID). Residues 143-162 (FIDEGRLLLEFDLLIFSFGQ) are Lumenal-facing. A helical transmembrane segment spans residues 163 to 188 (LPLALVTWVPMFLSTLLAPYQALRLW). The Cytoplasmic portion of the chain corresponds to 189–196 (ARGTWTQA). Residues 197–220 (TGLGCALLAAHAVVLCALPVHVAV) form a helical membrane-spanning segment. Over 221-228 (EHQLPPAS) the chain is Lumenal. The helical transmembrane segment at 229 to 252 (RCVLVFEQVRFLMKSYSFLREAVP) threads the bilayer. The Cytoplasmic portion of the chain corresponds to 253 to 293 (GTLRARRGEGIQAPSFSSYLYFLFCPTLIYRETYPRTPYVR). Cys277 is modified (cysteine sulfenic acid (-SOH); alternate). A Glycyl cysteine thioester (Cys-Gly) (interchain with G-Cter in ubiquitin); alternate cross-link involves residue Cys277. The helical transmembrane segment at 294 to 326 (WNYVAKNFAQALGCVLYACFILGRLCVPVFANM) threads the bilayer. At 327-343 (SREPFSTRALVLSILHA) the chain is on the lumenal side. Residues 344–369 (TLPGIFMLLLIFFAFLHCWLNAFAEM) traverse the membrane as a helical segment. Residues 370–417 (LRFGDRMFYRDWWNSTSFSNYYRTWNVVVHDWLYSYVYQDGLRLLGAR) are Cytoplasmic-facing. Residues 377–383 (FYRDWWN) carry the FYXDWWN motif motif. Positions 389, 392, 395, 399, 407, and 430 each coordinate an acyl-CoA. The helical transmembrane segment at 418–442 (ARGVAMLGVFLVSAVAHEYIFCFVL) threads the bilayer. The active site involves His434. The Lumenal segment spans residues 443–448 (GFFYPV). Residues 449–464 (MLILFLVIGGMLNFMM) traverse the membrane as a helical segment. The Cytoplasmic segment spans residues 465-470 (HDQRTG). The helical transmembrane segment at 471–502 (PAWNVLMWTMLFLGQGIQVSLYCQEWYARRHC) threads the bilayer. Over 503–522 (PLPQATFWGLVTPRSWSCHT) the chain is Lumenal.

The protein belongs to the membrane-bound acyltransferase family. Sterol o-acyltransferase subfamily. As to quaternary structure, may form homo- or heterodimers. Interacts with INSIG1; the interaction is direct and promotes association with AMFR/gp78. Polyubiquitinated by AMFR/gp78 at Cys-277, leading to its degradation when the lipid levels are low. Association with AMFR/gp78 is mediated via interaction with INSIG1. High concentration of cholesterol and fatty acid results in Cys-277 oxidation, preventing ubiquitination at the same site, resulting in protein stabilization. In terms of processing, oxidized at Cys-277: high concentration of cholesterol and fatty acid induce reactive oxygen species, which oxidizes Cys-277, preventing ubiquitination at the same site, and resulting in protein stabilization. Expression seems confined in hepatocytes and enterocytes.

The protein resides in the endoplasmic reticulum membrane. It catalyses the reaction a sterol + a long-chain fatty acyl-CoA = a long-chain 3-hydroxysterol ester + CoA. The enzyme catalyses cholesterol + an acyl-CoA = a cholesterol ester + CoA. The catalysed reaction is cholesterol + (9Z)-octadecenoyl-CoA = cholesteryl (9Z-octadecenoate) + CoA. It carries out the reaction (5Z,8Z,11Z,14Z,17Z)-eicosapentaenoyl-CoA + cholesterol = (5Z,8Z,11Z,14Z,17Z-eicosapentaenoyl)-cholesterol + CoA. It catalyses the reaction (9Z,12Z,15Z)-octadecatrienoyl-CoA + cholesterol = (9Z,12Z,15Z-octadecatrienoyl)-cholesterol + CoA. The enzyme catalyses (5Z,8Z,11Z,14Z)-eicosatetraenoyl-CoA + cholesterol = cholesteryl (5Z,8Z,11Z,14Z)-eicosatetraenoate + CoA. In terms of biological role, catalyzes the formation of fatty acid-cholesterol esters, which are less soluble in membranes than cholesterol. Plays a role in lipoprotein assembly and dietary cholesterol absorption. Utilizes oleoyl-CoA ((9Z)-octadecenoyl-CoA) and linolenoyl-CoA ((9Z,12Z,15Z)-octadecatrienoyl-CoA) as substrates. May provide cholesteryl esters for lipoprotein secretion from hepatocytes and intestinal mucosa. Has lower enzymatic activity compared to isoform 1. The protein is Sterol O-acyltransferase 2 of Homo sapiens (Human).